The sequence spans 581 residues: Putative ABC transporter ATP-binding protein MM_1996 (581 aa).

One can recognise an ABC transporter 1 domain in the interval 10-250; that stretch reads IEIRDLWYTY…LEVFHRLGLR (241 aa). 44–51 serves as a coordination point for ATP; the sequence is GPTGCGKS. Positions 287-309 are disordered; the sequence is GDYPASPGRKEKTSSPGWSSENN. Residues 300 to 309 are compositionally biased toward polar residues; that stretch reads SSPGWSSENN. An ABC transporter 2 domain is found at 313-541; the sequence is VSVRDLWSGY…IDILRKASLT (229 aa). 346–353 contacts ATP; it reads GTNGSGKS.

It belongs to the ABC transporter superfamily.

It localises to the cell membrane. Probably part of an ABC transporter complex. Responsible for energy coupling to the transport system. This chain is Putative ABC transporter ATP-binding protein MM_1996, found in Methanosarcina mazei (strain ATCC BAA-159 / DSM 3647 / Goe1 / Go1 / JCM 11833 / OCM 88) (Methanosarcina frisia).